The primary structure comprises 184 residues: ATP synthase subunit delta (184 aa).

It belongs to the ATPase delta chain family. In terms of assembly, F-type ATPases have 2 components, F(1) - the catalytic core - and F(0) - the membrane proton channel. F(1) has five subunits: alpha(3), beta(3), gamma(1), delta(1), epsilon(1). F(0) has three main subunits: a(1), b(2) and c(10-14). The alpha and beta chains form an alternating ring which encloses part of the gamma chain. F(1) is attached to F(0) by a central stalk formed by the gamma and epsilon chains, while a peripheral stalk is formed by the delta and b chains.

Its subcellular location is the cell inner membrane. In terms of biological role, f(1)F(0) ATP synthase produces ATP from ADP in the presence of a proton or sodium gradient. F-type ATPases consist of two structural domains, F(1) containing the extramembraneous catalytic core and F(0) containing the membrane proton channel, linked together by a central stalk and a peripheral stalk. During catalysis, ATP synthesis in the catalytic domain of F(1) is coupled via a rotary mechanism of the central stalk subunits to proton translocation. This protein is part of the stalk that links CF(0) to CF(1). It either transmits conformational changes from CF(0) to CF(1) or is implicated in proton conduction. The chain is ATP synthase subunit delta from Paramagnetospirillum magneticum (strain ATCC 700264 / AMB-1) (Magnetospirillum magneticum).